A 509-amino-acid polypeptide reads, in one-letter code: Maturase K (509 aa).

This sequence belongs to the intron maturase 2 family. MatK subfamily.

It is found in the plastid. It localises to the chloroplast. Usually encoded in the trnK tRNA gene intron. Probably assists in splicing its own and other chloroplast group II introns. In Nicotiana rustica (Aztec tobacco), this protein is Maturase K.